The primary structure comprises 182 residues: Adenine phosphoribosyltransferase (182 aa).

The protein belongs to the purine/pyrimidine phosphoribosyltransferase family. In terms of assembly, homodimer.

Its subcellular location is the cytoplasm. It carries out the reaction AMP + diphosphate = 5-phospho-alpha-D-ribose 1-diphosphate + adenine. Its pathway is purine metabolism; AMP biosynthesis via salvage pathway; AMP from adenine: step 1/1. In terms of biological role, catalyzes a salvage reaction resulting in the formation of AMP, that is energically less costly than de novo synthesis. This Pseudomonas syringae pv. tomato (strain ATCC BAA-871 / DC3000) protein is Adenine phosphoribosyltransferase.